The sequence spans 170 residues: Phosphopantetheine adenylyltransferase (170 aa).

Thr10 is a substrate binding site. Residues 10-11 and His18 each bind ATP; that span reads TF. Substrate-binding residues include Lys42, Val79, and Arg93. ATP contacts are provided by residues 94–96, Glu104, and 129–135; these read GLR and TQFISST.

This sequence belongs to the bacterial CoaD family. In terms of assembly, homohexamer. Mg(2+) is required as a cofactor.

The protein localises to the cytoplasm. The catalysed reaction is (R)-4'-phosphopantetheine + ATP + H(+) = 3'-dephospho-CoA + diphosphate. It participates in cofactor biosynthesis; coenzyme A biosynthesis; CoA from (R)-pantothenate: step 4/5. Reversibly transfers an adenylyl group from ATP to 4'-phosphopantetheine, yielding dephospho-CoA (dPCoA) and pyrophosphate. This Parvibaculum lavamentivorans (strain DS-1 / DSM 13023 / NCIMB 13966) protein is Phosphopantetheine adenylyltransferase.